Consider the following 305-residue polypeptide: tRNA uridine(34) hydroxylase (305 aa).

The Rhodanese domain occupies 125 to 219 (ADENTVVVDT…YLEEVPREQS (95 aa)). The active-site Cysteine persulfide intermediate is Cys-179.

This sequence belongs to the TrhO family.

The catalysed reaction is uridine(34) in tRNA + AH2 + O2 = 5-hydroxyuridine(34) in tRNA + A + H2O. Catalyzes oxygen-dependent 5-hydroxyuridine (ho5U) modification at position 34 in tRNAs. This is tRNA uridine(34) hydroxylase from Brucella ovis (strain ATCC 25840 / 63/290 / NCTC 10512).